We begin with the raw amino-acid sequence, 312 residues long: Carbamate kinase 2 (312 aa).

This sequence belongs to the carbamate kinase family.

The protein resides in the cytoplasm. It carries out the reaction hydrogencarbonate + NH4(+) + ATP = carbamoyl phosphate + ADP + H2O + H(+). It participates in metabolic intermediate metabolism; carbamoyl phosphate degradation; CO(2) and NH(3) from carbamoyl phosphate: step 1/1. The polypeptide is Carbamate kinase 2 (arcC2) (Enterococcus faecalis (strain ATCC 700802 / V583)).